The sequence spans 172 residues: R-phycocyanin-2 beta chain (172 aa).

Position 72 is an N4-methylasparagine (Asn72). A (2R,3E)-phycocyanobilin-binding site is contributed by Cys82. Cys153 contacts (2R,3E)-phycoerythrobilin.

This sequence belongs to the phycobiliprotein family. In terms of assembly, heterodimer of an alpha and a beta chain. Contains two covalently linked bilin chromophores.

It is found in the cellular thylakoid membrane. In terms of biological role, light-harvesting photosynthetic bile pigment-protein from the phycobiliprotein complex. The chain is R-phycocyanin-2 beta chain (rpcB) from Synechococcus sp. (strain WH8020).